Consider the following 120-residue polypeptide: Glycine cleavage system H protein (120 aa).

Positions Ile17–Arg99 constitute a Lipoyl-binding domain. Lys58 bears the N6-lipoyllysine mark.

It belongs to the GcvH family. The glycine cleavage system is composed of four proteins: P, T, L and H. (R)-lipoate is required as a cofactor.

In terms of biological role, the glycine cleavage system catalyzes the degradation of glycine. The H protein shuttles the methylamine group of glycine from the P protein to the T protein. The polypeptide is Glycine cleavage system H protein (Methylobacterium nodulans (strain LMG 21967 / CNCM I-2342 / ORS 2060)).